Consider the following 82-residue polypeptide: ATP synthase subunit c, chloroplastic (82 aa).

2 helical membrane passes run 7–27 and 57–77; these read AASV…PGIG and LAFM…LLFA.

The protein belongs to the ATPase C chain family. In terms of assembly, F-type ATPases have 2 components, F(1) - the catalytic core - and F(0) - the membrane proton channel. F(1) has five subunits: alpha(3), beta(3), gamma(1), delta(1), epsilon(1). F(0) has four main subunits: a(1), b(1), b'(1) and c(10-14). The alpha and beta chains form an alternating ring which encloses part of the gamma chain. F(1) is attached to F(0) by a central stalk formed by the gamma and epsilon chains, while a peripheral stalk is formed by the delta, b and b' chains.

Its subcellular location is the plastid. The protein localises to the chloroplast thylakoid membrane. Its function is as follows. F(1)F(0) ATP synthase produces ATP from ADP in the presence of a proton or sodium gradient. F-type ATPases consist of two structural domains, F(1) containing the extramembraneous catalytic core and F(0) containing the membrane proton channel, linked together by a central stalk and a peripheral stalk. During catalysis, ATP synthesis in the catalytic domain of F(1) is coupled via a rotary mechanism of the central stalk subunits to proton translocation. Functionally, key component of the F(0) channel; it plays a direct role in translocation across the membrane. A homomeric c-ring of between 10-14 subunits forms the central stalk rotor element with the F(1) delta and epsilon subunits. This Guillardia theta (Cryptophyte) protein is ATP synthase subunit c, chloroplastic.